Here is a 468-residue protein sequence, read N- to C-terminus: Cytochrome P450-like protein L532 (468 aa).

2 helical membrane passes run Trp22–Ile42 and Val172–Val192. Cys415 is a heme binding site.

The protein belongs to the cytochrome P450 family. It depends on heme as a cofactor.

It localises to the host membrane. Its subcellular location is the virion. This chain is Cytochrome P450-like protein L532, found in Acanthamoeba polyphaga mimivirus (APMV).